The chain runs to 248 residues: 1-(5-phosphoribosyl)-5-[(5-phosphoribosylamino)methylideneamino] imidazole-4-carboxamide isomerase (248 aa).

Aspartate 8 acts as the Proton acceptor in catalysis. Catalysis depends on aspartate 131, which acts as the Proton donor.

The protein belongs to the HisA/HisF family.

It localises to the cytoplasm. It carries out the reaction 1-(5-phospho-beta-D-ribosyl)-5-[(5-phospho-beta-D-ribosylamino)methylideneamino]imidazole-4-carboxamide = 5-[(5-phospho-1-deoxy-D-ribulos-1-ylimino)methylamino]-1-(5-phospho-beta-D-ribosyl)imidazole-4-carboxamide. The protein operates within amino-acid biosynthesis; L-histidine biosynthesis; L-histidine from 5-phospho-alpha-D-ribose 1-diphosphate: step 4/9. The protein is 1-(5-phosphoribosyl)-5-[(5-phosphoribosylamino)methylideneamino] imidazole-4-carboxamide isomerase of Cupriavidus necator (strain ATCC 17699 / DSM 428 / KCTC 22496 / NCIMB 10442 / H16 / Stanier 337) (Ralstonia eutropha).